Consider the following 265-residue polypeptide: 4-hydroxy-tetrahydrodipicolinate reductase (265 aa).

NAD(+)-binding positions include 7-12 (GASGRM) and D33. Position 34 (R34) interacts with NADP(+). NAD(+) contacts are provided by residues 96–98 (GTT) and 120–123 (AANM). H153 (proton donor/acceptor) is an active-site residue. Residue H154 coordinates (S)-2,3,4,5-tetrahydrodipicolinate. The active-site Proton donor is the K157. A (S)-2,3,4,5-tetrahydrodipicolinate-binding site is contributed by 163 to 164 (GT).

This sequence belongs to the DapB family.

It localises to the cytoplasm. The enzyme catalyses (S)-2,3,4,5-tetrahydrodipicolinate + NAD(+) + H2O = (2S,4S)-4-hydroxy-2,3,4,5-tetrahydrodipicolinate + NADH + H(+). It catalyses the reaction (S)-2,3,4,5-tetrahydrodipicolinate + NADP(+) + H2O = (2S,4S)-4-hydroxy-2,3,4,5-tetrahydrodipicolinate + NADPH + H(+). It functions in the pathway amino-acid biosynthesis; L-lysine biosynthesis via DAP pathway; (S)-tetrahydrodipicolinate from L-aspartate: step 4/4. In terms of biological role, catalyzes the conversion of 4-hydroxy-tetrahydrodipicolinate (HTPA) to tetrahydrodipicolinate. The polypeptide is 4-hydroxy-tetrahydrodipicolinate reductase (Burkholderia cenocepacia (strain ATCC BAA-245 / DSM 16553 / LMG 16656 / NCTC 13227 / J2315 / CF5610) (Burkholderia cepacia (strain J2315))).